The primary structure comprises 268 residues: WUSCHEL-related homeobox 12 (268 aa).

The span at 1–16 (MNQEGASHSPSSTSTE) shows a compositional bias: polar residues. Disordered regions lie at residues 1–22 (MNQE…RARW) and 173–198 (SDHN…QNSN). A DNA-binding region (homeobox; WUS-type) is located at residues 17–81 (PVRARWSPKP…NRRSRSRRRH (65 aa)).

The protein belongs to the WUS homeobox family.

It localises to the nucleus. Its function is as follows. Transcription factor which may be involved in developmental processes. The protein is WUSCHEL-related homeobox 12 (WOX12) of Arabidopsis thaliana (Mouse-ear cress).